The primary structure comprises 3901 residues: Nonribosomal peptide synthetase opaA (3901 aa).

Residues 248–641 (HNAQHHPSVV…HRKDNQIKIR (394 aa)) are adenylation 1. A Carrier 1 domain is found at 780-854 (LPVTANEIVV…DMATRLTRIK (75 aa)). The residue at position 815 (serine 815) is an O-(pantetheine 4'-phosphoryl)serine. The tract at residues 891-1164 (DAYPCSALQE…IATVPIRINL (274 aa)) is condensation 1. An adenylation 2 region spans residues 1328 to 1725 (QSHAQKTPKS…GRIGNQVKLR (398 aa)). One can recognise a Carrier 2 domain in the interval 1858 to 1936 (RTPLDTERDL…QIAAQAATRA (79 aa)). Position 1895 is an O-(pantetheine 4'-phosphoryl)serine (serine 1895). An epimerase region spans residues 1953–2261 (KLTPIQQLFF…KDARRRLTRN (309 aa)). The tract at residues 2403 to 2826 (ENLYPCAPIQ…LVSTDHKRLL (424 aa)) is condensation 2. Positions 2846–3243 (QQHVRETPDA…GRKDSQIKIR (398 aa)) are adenylation 3. Positions 3375-3451 (LPSTAGEQLL…ALAARSRSKD (77 aa)) constitute a Carrier 3 domain. An O-(pantetheine 4'-phosphoryl)serine modification is found at serine 3412. Residues 3509–3837 (HHFSFAVEGK…EDLKTHFTLN (329 aa)) form a condensation 3 region.

This sequence belongs to the NRP synthetase family.

Functionally, nonribosomal peptide synthetase; part of the gene cluster that mediates the biosynthesis of oxepinamides, derivatives of anthranilyl-containing tripeptides that share an oxepin ring and a fused pyrimidinone moiety. The nonribosomal peptide synthetase (NRPS) opaA assembles the quinazolinone core with D-Phe incorporation. The first adenylation domain (A1) of opaA loads and activates anthranilic acid whereas the second A domain (A2) is for activating of L-Phe, which is then converted to D-form by the E domain. The third A domain (A3) is responsible for L-Ile activation and the terminal condensation domain C3 for cyclization and releasing the NRPS product protuboxepin K. The cytochrome P450 monooxygenase opaB then catalyzes alone the oxepin ring formation to convert protuboxepin K into protuboxepin A. The flavoenzyme opaC installs subsequently one hydroxyl group at the oxepin ring, accompanied by double bond migration, to form 15-epi-oxepinamide E. The epimerase opaE changes the D-Phe residue back to L-form, leading to oxepinamide E, which is further methylated at the hydroxyl group at C-12 by the O-methyltransferase OpaF to yield oxepinamide F. The chain is Nonribosomal peptide synthetase opaA from Aspergillus ustus.